We begin with the raw amino-acid sequence, 210 residues long: Thymidylate kinase (210 aa).

10 to 17 (GPEGAGKS) serves as a coordination point for ATP.

The protein belongs to the thymidylate kinase family.

It carries out the reaction dTMP + ATP = dTDP + ADP. Phosphorylation of dTMP to form dTDP in both de novo and salvage pathways of dTTP synthesis. The sequence is that of Thymidylate kinase from Pseudomonas fluorescens (strain SBW25).